Reading from the N-terminus, the 514-residue chain is ATP synthase subunit alpha (514 aa).

170–177 serves as a coordination point for ATP; the sequence is GDRQIGKT.

This sequence belongs to the ATPase alpha/beta chains family. In terms of assembly, F-type ATPases have 2 components, CF(1) - the catalytic core - and CF(0) - the membrane proton channel. CF(1) has five subunits: alpha(3), beta(3), gamma(1), delta(1), epsilon(1). CF(0) has three main subunits: a(1), b(2) and c(9-12). The alpha and beta chains form an alternating ring which encloses part of the gamma chain. CF(1) is attached to CF(0) by a central stalk formed by the gamma and epsilon chains, while a peripheral stalk is formed by the delta and b chains.

Its subcellular location is the cell inner membrane. It carries out the reaction ATP + H2O + 4 H(+)(in) = ADP + phosphate + 5 H(+)(out). Its function is as follows. Produces ATP from ADP in the presence of a proton gradient across the membrane. The alpha chain is a regulatory subunit. The chain is ATP synthase subunit alpha from Pseudomonas fluorescens (strain ATCC BAA-477 / NRRL B-23932 / Pf-5).